The following is a 619-amino-acid chain: Phosphomethylpyrimidine synthase (619 aa).

A compositionally biased stretch (polar residues) spans 1–11 (MHEQRSLTMNA). The segment at 1-25 (MHEQRSLTMNALTPAVSTGPLPASR) is disordered. Residues asparagine 220, methionine 249, tyrosine 278, histidine 314, 334-336 (SRG), 375-378 (DGLR), and glutamate 414 each bind substrate. Residue histidine 418 coordinates Zn(2+). Tyrosine 441 serves as a coordination point for substrate. Zn(2+) is bound at residue histidine 482. [4Fe-4S] cluster is bound by residues cysteine 562, cysteine 565, and cysteine 570.

Belongs to the ThiC family. In terms of assembly, homodimer. [4Fe-4S] cluster is required as a cofactor.

The catalysed reaction is 5-amino-1-(5-phospho-beta-D-ribosyl)imidazole + S-adenosyl-L-methionine = 4-amino-2-methyl-5-(phosphooxymethyl)pyrimidine + CO + 5'-deoxyadenosine + formate + L-methionine + 3 H(+). The protein operates within cofactor biosynthesis; thiamine diphosphate biosynthesis. Functionally, catalyzes the synthesis of the hydroxymethylpyrimidine phosphate (HMP-P) moiety of thiamine from aminoimidazole ribotide (AIR) in a radical S-adenosyl-L-methionine (SAM)-dependent reaction. In Mesorhizobium japonicum (strain LMG 29417 / CECT 9101 / MAFF 303099) (Mesorhizobium loti (strain MAFF 303099)), this protein is Phosphomethylpyrimidine synthase.